Consider the following 91-residue polypeptide: MIPRNFFFTILICPFNVCATFTAVATASPDCIGPFASYALFAFVTCICVCSIVCLVINFFQLVDWIFVRIAYLRHHPEYRNQNVAALLRLI.

The first 22 residues, 1-22, serve as a signal peptide directing secretion; the sequence is MIPRNFFFTILICPFNVCATFT. Over 23–34 the chain is Lumenal; that stretch reads AVATASPDCIGP. The chain crosses the membrane as a helical span at residues 35 to 60; sequence FASYALFAFVTCICVCSIVCLVINFF. Topologically, residues 61-91 are cytoplasmic; sequence QLVDWIFVRIAYLRHHPEYRNQNVAALLRLI.

Belongs to the adenoviridae E3B family.

The protein localises to the host endoplasmic reticulum membrane. Functionally, down-regulates the EGF receptor. The polypeptide is Early E3B 10.4 kDa protein (Human adenovirus B serotype 3 (HAdV-3)).